The chain runs to 274 residues: Large ribosomal subunit protein uL2cz (274 aa).

2 disordered regions span residues 1-25 and 224-274; these read MAIH…VKSN and NPVD…RRSK. Residues 7 to 25 show a composition bias toward polar residues; the sequence is KTSTPSTRNGTVDSQVKSN.

It belongs to the universal ribosomal protein uL2 family. As to quaternary structure, part of the 50S ribosomal subunit.

The protein resides in the plastid. Its subcellular location is the chloroplast. The protein is Large ribosomal subunit protein uL2cz (rpl2-A) of Coffea arabica (Arabian coffee).